We begin with the raw amino-acid sequence, 363 residues long: Mitogen-activated protein kinase 13 (363 aa).

In terms of domain architecture, Protein kinase spans 33–319 (IPPIEPIGRG…VDEALKQPYL (287 aa)). Residues 39–47 (IGRGAYGIV) and lysine 62 each bind ATP. The active-site Proton acceptor is the aspartate 159. Residue threonine 191 is modified to Phosphothreonine. A TXY motif is present at residues 191–193 (TEY). A Phosphotyrosine modification is found at tyrosine 193. The residue at position 196 (threonine 196) is a Phosphothreonine.

It belongs to the protein kinase superfamily. CMGC Ser/Thr protein kinase family. MAP kinase subfamily. Interacts with MKK6. Post-translationally, dually phosphorylated on Thr-191 and Tyr-193, which activates the enzyme. Expressed in roots, stems and flower buds.

It carries out the reaction L-seryl-[protein] + ATP = O-phospho-L-seryl-[protein] + ADP + H(+). It catalyses the reaction L-threonyl-[protein] + ATP = O-phospho-L-threonyl-[protein] + ADP + H(+). Activated by threonine and tyrosine phosphorylation. Activated by the MAP kinase kinase MKK6 in vitro. Functionally, MKK6-MPK13 module positively regulates lateral root formation. This is Mitogen-activated protein kinase 13 (MPK13) from Arabidopsis thaliana (Mouse-ear cress).